The sequence spans 176 residues: 2-C-methyl-D-erythritol 2,4-cyclodiphosphate synthase (176 aa).

A divalent metal cation contacts are provided by aspartate 22 and histidine 24. 4-CDP-2-C-methyl-D-erythritol 2-phosphate is bound by residues 22–24 (DVH) and 48–49 (HS). An a divalent metal cation-binding site is contributed by histidine 56. Residues 70-72 (DIG), 146-149 (TTSE), phenylalanine 153, and arginine 156 contribute to the 4-CDP-2-C-methyl-D-erythritol 2-phosphate site.

This sequence belongs to the IspF family. In terms of assembly, homotrimer. It depends on a divalent metal cation as a cofactor.

The enzyme catalyses 4-CDP-2-C-methyl-D-erythritol 2-phosphate = 2-C-methyl-D-erythritol 2,4-cyclic diphosphate + CMP. It participates in isoprenoid biosynthesis; isopentenyl diphosphate biosynthesis via DXP pathway; isopentenyl diphosphate from 1-deoxy-D-xylulose 5-phosphate: step 4/6. Involved in the biosynthesis of isopentenyl diphosphate (IPP) and dimethylallyl diphosphate (DMAPP), two major building blocks of isoprenoid compounds. Catalyzes the conversion of 4-diphosphocytidyl-2-C-methyl-D-erythritol 2-phosphate (CDP-ME2P) to 2-C-methyl-D-erythritol 2,4-cyclodiphosphate (ME-CPP) with a corresponding release of cytidine 5-monophosphate (CMP). The sequence is that of 2-C-methyl-D-erythritol 2,4-cyclodiphosphate synthase from Xylella fastidiosa (strain 9a5c).